We begin with the raw amino-acid sequence, 302 residues long: Glycine--tRNA ligase alpha subunit (302 aa).

It belongs to the class-II aminoacyl-tRNA synthetase family. As to quaternary structure, tetramer of two alpha and two beta subunits.

It localises to the cytoplasm. It carries out the reaction tRNA(Gly) + glycine + ATP = glycyl-tRNA(Gly) + AMP + diphosphate. The sequence is that of Glycine--tRNA ligase alpha subunit from Haemophilus ducreyi (strain 35000HP / ATCC 700724).